A 404-amino-acid polypeptide reads, in one-letter code: MSLSERQKEEINRAIAEYMQNNGYSESFSVFLKESSLSENDIKPLGGILEKKWTTVLRLQRKVNDLESKLQESQREINHGAPTRDKRQAADWIPRPPETQKLTGHRLPITRVIFHPLWTIMASCSEDATIKVWDYETGQLERTLKGHTDAVNDIAIDAAGKQLVSCSSDLSIKLWDFGQTYDCLKSLKGHEHTVSSVTFLPTGDFVLSASRDHTIKQWDISTGYCVYTFRGHNDWVRMIRISNDGTLFASASLDQTVTVWSFATKSAKLVLRDHEHAVECVEWAPDTAYTNVTGQQPEGNSTHILFSGSRDRSIKAWNINTGDVLFTLLAHENWVRGLAFHPKGKYLISVADDKTLRVWELSAQRCMKAIEAHEHFVSTVAFHQTSPFVITGSVDMSCKVWECR.

The LisH domain maps to Gln7–Glu39. Positions Thr54 to Ala81 form a coiled coil. The segment covering Lys69 to Ala89 has biased composition (basic and acidic residues). Positions Lys69–Ala90 are disordered. 7 WD repeats span residues Gly104–Lys145, Gly146–Lys185, Gly189–Thr228, Gly231–Val270, Asp273–Thr327, Ala330–Ala369, and Ala372–Arg404.

Belongs to the WD repeat LIS1/nudF family. In terms of assembly, component of a dynein-regulating complex composed of at least lis-1 and nud-2. Interacts with nud-2; the interaction is direct. Expressed in all classes of neurons in the ventral cord. Expressed in the multinucleate spermathecal valves and adult seam cells.

The protein localises to the cytoplasm. The protein resides in the cytoskeleton. Its subcellular location is the microtubule organizing center. It is found in the centrosome. It localises to the chromosome. The protein localises to the centromere. The protein resides in the kinetochore. Its subcellular location is the nucleus envelope. Functionally, positively regulates the activity of the minus-end directed microtubule motor protein dynein. May enhance dynein-mediated microtubule sliding by targeting dynein to the microtubule plus end. Required for several dynein- and microtubule-dependent processes such as nuclear migration during cell division. Part of a complex with nud-2, which is recruited to the nuclear envelope by unc-83, where, in turn, it recruits dynein to the nuclear surface and regulates nuclear migration in hypodermal precursor cells. Plays a role in GABAergic synaptic vesicle localization in the ventral nerve cord. Required for neuronal cell differentiation. The polypeptide is Lissencephaly-1 homolog (Caenorhabditis elegans).